The primary structure comprises 159 residues: Serine-protein kinase RsbW (159 aa).

The protein belongs to the anti-sigma-factor family.

It carries out the reaction L-seryl-[protein] + ATP = O-phospho-L-seryl-[protein] + ADP + H(+). The enzyme catalyses L-threonyl-[protein] + ATP = O-phospho-L-threonyl-[protein] + ADP + H(+). Negative regulator of sigma-B activity. Phosphorylates and inactivates its specific antagonist protein, RsbV. Upon phosphorylation of RsbV, RsbW is released and binds to sigma-B, thereby blocking its ability to form an RNA polymerase holoenzyme (E-sigma-B). The chain is Serine-protein kinase RsbW from Staphylococcus aureus.